Consider the following 180-residue polypeptide: Large ribosomal subunit protein uL5c (180 aa).

Belongs to the universal ribosomal protein uL5 family. In terms of assembly, part of the 50S ribosomal subunit; contacts the 5S rRNA.

The protein resides in the plastid. Its subcellular location is the chloroplast. In terms of biological role, binds 5S rRNA, forms part of the central protuberance of the 50S subunit. In Oltmannsiellopsis viridis (Marine flagellate), this protein is Large ribosomal subunit protein uL5c (rpl5).